The sequence spans 320 residues: MSRKKIVLAGAGQIGGTLAHLAMLHRLGDVTLLDVNANPPKGKALDLSHAAAVEGCDAVLTGTADQADIAGADVVIVTAGVPRRPGVDRDALLAINLPVMESIGTAIGRYCPDAFVICITNPLDAMVWALRRFSGLPPARVVGMGGVLDSARLRSFLAEALGVSVTEVQAMTLGGHGDDMVPLVRQATVGGVPLPALVKMGWITQQAIDDIVQRTRTGGAEVVNLLWTSSAYYAPASAAIAMATSYLGDQKRVFAASAALSGQYGVDGLHVGVPVMIGAGGIEKIIELEFDDEEQRQFTRSVAAVAALVEDCKRLHRGLA.

NAD(+) is bound by residues 10 to 15 (GAGQIG) and Asp-34. Substrate contacts are provided by Arg-83 and Arg-89. NAD(+) contacts are provided by residues Asn-96 and 119–121 (ITN). Residues Asn-121 and Arg-152 each contribute to the substrate site. The active-site Proton acceptor is the His-176.

Belongs to the LDH/MDH superfamily. MDH type 3 family.

It catalyses the reaction (S)-malate + NAD(+) = oxaloacetate + NADH + H(+). Catalyzes the reversible oxidation of malate to oxaloacetate. This chain is Malate dehydrogenase 2, found in Rhodopseudomonas palustris (strain BisB18).